Here is a 113-residue protein sequence, read N- to C-terminus: MTDTHSIAQPFEAEVSPANNRQLTVSYASRYPDYSRIPAITLKGQWLEAAGFATGTAVDVKVMEGCIVLTAQPPAAAESELMQSLRQVCKLSARKQRQVQEFIGVIAGKQKVA.

The region spanning 29–74 is the SpoVT-AbrB domain; it reads SRYPDYSRIPAITLKGQWLEAAGFATGTAVDVKVMEGCIVLTAQPP.

The protein belongs to the SymE family.

It localises to the cytoplasm. Functionally, involved in the degradation and recycling of damaged RNA. It is itself a target for degradation by the ATP-dependent protease Lon. The chain is Endoribonuclease SymE from Escherichia coli O6:K15:H31 (strain 536 / UPEC).